The sequence spans 126 residues: C-type natriuretic peptide (126 aa).

The N-terminal stretch at 1-23 is a signal peptide; sequence MHLSQLIACALLLALLSLRPSEA. Residues 19 to 71 are disordered; sequence RPSEAKPGTPPKVPRTPPGEELAEPQAAGGNQKKGDKTPGGGGANLKGDRSRL. Residues 24–73 constitute a propeptide that is removed on maturation; the sequence is KPGTPPKVPRTPPGEELAEPQAAGGNQKKGDKTPGGGGANLKGDRSRLLR. A compositionally biased stretch (pro residues) spans 26 to 35; sequence GTPPKVPRTP. C110 and C126 are disulfide-bonded.

This sequence belongs to the natriuretic peptide family. Degraded by IDE (in vitro). As to expression, expressed exclusively in brain.

Its subcellular location is the secreted. Functionally, hormone which plays a role in endochondral ossification through regulation of cartilaginous growth plate chondrocytes proliferation and differentiation. May also be vasoactive and natriuretic. Acts by specifically binding and stimulating NPR2 to produce cGMP. Binds the clearance receptor NPR3. The chain is C-type natriuretic peptide (Nppc) from Rattus norvegicus (Rat).